The primary structure comprises 398 residues: 1-deoxy-D-xylulose 5-phosphate reductoisomerase (398 aa).

The NADPH site is built by threonine 10, glycine 11, serine 12, isoleucine 13, asparagine 38, and asparagine 124. Lysine 125 provides a ligand contact to 1-deoxy-D-xylulose 5-phosphate. Residue glutamate 126 coordinates NADPH. Residue aspartate 150 participates in Mn(2+) binding. The 1-deoxy-D-xylulose 5-phosphate site is built by serine 151, glutamate 152, serine 186, and histidine 209. Glutamate 152 provides a ligand contact to Mn(2+). Glycine 215 provides a ligand contact to NADPH. 4 residues coordinate 1-deoxy-D-xylulose 5-phosphate: serine 222, asparagine 227, lysine 228, and glutamate 231. Glutamate 231 provides a ligand contact to Mn(2+).

Belongs to the DXR family. The cofactor is Mg(2+). Mn(2+) is required as a cofactor.

It carries out the reaction 2-C-methyl-D-erythritol 4-phosphate + NADP(+) = 1-deoxy-D-xylulose 5-phosphate + NADPH + H(+). It participates in isoprenoid biosynthesis; isopentenyl diphosphate biosynthesis via DXP pathway; isopentenyl diphosphate from 1-deoxy-D-xylulose 5-phosphate: step 1/6. Functionally, catalyzes the NADPH-dependent rearrangement and reduction of 1-deoxy-D-xylulose-5-phosphate (DXP) to 2-C-methyl-D-erythritol 4-phosphate (MEP). The sequence is that of 1-deoxy-D-xylulose 5-phosphate reductoisomerase from Baumannia cicadellinicola subsp. Homalodisca coagulata.